The primary structure comprises 326 residues: MSWLTPDVIEILLSILKAVVILLVVVSCGAFMSFGERRLLGLFQNRYGPNRVGWGGSLQLVADMIKMFFKEDWIPRFSDRVIFTLAPMIAFTSLLLAFAIVPVSPTWVVADLNIGILFFLMMAGLGVYAVLFAGWSSNNKYSLLGAMRASAQTLSYEVFLGLSLMGVVAQAGSFNMTDIVNNQAHLWNVIPQFFGFITFAIAGVAVCHRHPFDQPEAEQELADGYHIEYSGMKFGLFFVGEYIGIVTVSALIVTLFFGGWQGPWLPPFIWFALKTAFFMMMFILIRAALPRPRYDQVMSFGWKVCLPLTLINLLVTAAVILWQTAA.

8 consecutive transmembrane segments (helical) span residues 11–31, 81–101, 114–134, 154–174, 186–206, 237–257, 265–285, and 302–322; these read ILLS…CGAF, VIFT…FAIV, IGIL…LFAG, LSYE…AGSF, LWNV…GVAV, FFVG…TLFF, LPPF…FILI, and WKVC…VILW.

The protein belongs to the complex I subunit 1 family. As to quaternary structure, NDH-1 is composed of 13 different subunits. Subunits NuoA, H, J, K, L, M, N constitute the membrane sector of the complex.

Its subcellular location is the cell inner membrane. The enzyme catalyses a quinone + NADH + 5 H(+)(in) = a quinol + NAD(+) + 4 H(+)(out). In terms of biological role, NDH-1 shuttles electrons from NADH, via FMN and iron-sulfur (Fe-S) centers, to quinones in the respiratory chain. The immediate electron acceptor for the enzyme in this species is believed to be ubiquinone. Couples the redox reaction to proton translocation (for every two electrons transferred, four hydrogen ions are translocated across the cytoplasmic membrane), and thus conserves the redox energy in a proton gradient. This subunit may bind ubiquinone. The polypeptide is NADH-quinone oxidoreductase subunit H (Cronobacter sakazakii (strain ATCC BAA-894) (Enterobacter sakazakii)).